We begin with the raw amino-acid sequence, 671 residues long: UvrABC system protein B (671 aa).

The Helicase ATP-binding domain occupies 25 to 412 (EGIDAGLAHQ…AGRVVEQVVR (388 aa)). ATP is bound at residue 38 to 45 (GVTGSGKT). Residues 91–114 (YYDYYQPEAYVPSSDTFIEKDASI) carry the Beta-hairpin motif. In terms of domain architecture, Helicase C-terminal spans 429–595 (QVDDLLSEIH…GVFKDVADIM (167 aa)). The segment at 600–624 (VPGSRSKKRKGMAKAAEENARYENE) is disordered. The span at 614 to 624 (AAEENARYENE) shows a compositional bias: basic and acidic residues. The UVR domain occupies 632–667 (NKRIRQLEEKMYQLARDLEFEAAAQMRDEIGKLRER).

It belongs to the UvrB family. As to quaternary structure, forms a heterotetramer with UvrA during the search for lesions. Interacts with UvrC in an incision complex.

The protein localises to the cytoplasm. In terms of biological role, the UvrABC repair system catalyzes the recognition and processing of DNA lesions. A damage recognition complex composed of 2 UvrA and 2 UvrB subunits scans DNA for abnormalities. Upon binding of the UvrA(2)B(2) complex to a putative damaged site, the DNA wraps around one UvrB monomer. DNA wrap is dependent on ATP binding by UvrB and probably causes local melting of the DNA helix, facilitating insertion of UvrB beta-hairpin between the DNA strands. Then UvrB probes one DNA strand for the presence of a lesion. If a lesion is found the UvrA subunits dissociate and the UvrB-DNA preincision complex is formed. This complex is subsequently bound by UvrC and the second UvrB is released. If no lesion is found, the DNA wraps around the other UvrB subunit that will check the other stand for damage. The polypeptide is UvrABC system protein B (Pseudomonas savastanoi pv. phaseolicola (strain 1448A / Race 6) (Pseudomonas syringae pv. phaseolicola (strain 1448A / Race 6))).